We begin with the raw amino-acid sequence, 230 residues long: MKITKNILKAEFIKRPNRFQAYVKINEKIEMVHVPNTGRCKEILIPGSTVILREENNENRKTRYDLIAGYKGDMLISIDSQIPNKVVYEALMNFKIEILKEYTNIKREKTFGKSRFDFKLEKENGEVYYLEVKGVTLENDGLTMFPDAPTERGTKHILELIDVKNKGMGAGVLFLIQLNGVKKFTPNHKMDKNFGEALRLAKEKGVDILAYDCLVEESSISLNNPVSIEI.

Belongs to the SfsA family.

The sequence is that of Sugar fermentation stimulation protein homolog from Clostridium botulinum (strain 657 / Type Ba4).